A 693-amino-acid chain; its full sequence is G1/S-specific cyclin CCN1 (693 aa).

The span at 273-298 (QKKQKKALSSNSSRTTTASYTHQNQS) shows a compositional bias: polar residues. Disordered stretches follow at residues 273–320 (QKKQ…EDDD), 465–571 (DEDE…PPGS), 595–615 (SNSS…EKRY), and 662–693 (NNTN…QYHQ). Composition is skewed to acidic residues over residues 306–320 (DEDI…EDDD) and 465–476 (DEDENVSTDDEA). Composition is skewed to polar residues over residues 489–516 (DGNN…NHPQ) and 524–563 (PSAT…SSFA). A compositionally biased stretch (low complexity) spans 666–685 (SSSPLMNQQQQQQVTQSSLY).

This sequence belongs to the cyclin family. As to quaternary structure, interacts with CDC28. The CDC28-CCN1 complex associates with septin CDC11 upon hyphal induction.

G1/S-specific cyclin essential for the control of the cell cycle at the G1/S (start) transition and for maintenance of filamentous growth. Through binding to CDC28 controls the phosphorylation of CDC11 and SEC2 upon induction of filamentous growth. The protein is G1/S-specific cyclin CCN1 (CCN1) of Candida albicans (strain SC5314 / ATCC MYA-2876) (Yeast).